A 155-amino-acid chain; its full sequence is Transcriptional regulator MraZ (155 aa).

SpoVT-AbrB domains follow at residues 7–54 (TYEC…PMEE) and 83–126 (VKTV…DKDK).

It belongs to the MraZ family. Forms oligomers.

It is found in the cytoplasm. It localises to the nucleoid. The polypeptide is Transcriptional regulator MraZ (Christiangramia forsetii (strain DSM 17595 / CGMCC 1.15422 / KT0803) (Gramella forsetii)).